Consider the following 305-residue polypeptide: MENKYTHGVLFYHEHSGLKNINQGIGEVTTALSSICKHLSIQLSENEGDIIKYCQEIKTKNYAKDVDILFILGGDGTVNELINGVMTNDLQLPIGILPGGTFNDFTKTLNIAPNHKQASEQMISAQVGTYDVIKINNQYALNFVGLGLIVQNAENVQDGSKDIFGKLSYIGSTVKTLLNPTQFNYQLSIDDKTYSGETSMILSANGPFIGGSRIPLTDLSPQDGELNTFIFNEQSFSILNDIFKKRDSMNWNEITQGIEHIPGKKISLTTDPAMKVDIDGEISLETPIDIEVIPNAIQLLTVNDL.

One can recognise a DAGKc domain in the interval 3–139 (NKYTHGVLFY…YDVIKINNQY (137 aa)). ATP is bound by residues S44, 74-80 (GDGTVNE), and T101. Positions 220, 223, and 225 each coordinate Mg(2+). E281 serves as the catalytic Proton acceptor.

The protein belongs to the diacylglycerol/lipid kinase family. Mg(2+) is required as a cofactor.

Its function is as follows. May catalyze the ATP-dependent phosphorylation of lipids other than diacylglycerol (DAG). The chain is Putative lipid kinase SAB0675c from Staphylococcus aureus (strain bovine RF122 / ET3-1).